The sequence spans 196 residues: ATP-dependent Clp protease proteolytic subunit (196 aa).

Ser101 (nucleophile) is an active-site residue. His126 is a catalytic residue.

The protein belongs to the peptidase S14 family. As to quaternary structure, component of the chloroplastic Clp protease core complex.

Its subcellular location is the plastid. It is found in the chloroplast stroma. The catalysed reaction is Hydrolysis of proteins to small peptides in the presence of ATP and magnesium. alpha-casein is the usual test substrate. In the absence of ATP, only oligopeptides shorter than five residues are hydrolyzed (such as succinyl-Leu-Tyr-|-NHMec, and Leu-Tyr-Leu-|-Tyr-Trp, in which cleavage of the -Tyr-|-Leu- and -Tyr-|-Trp bonds also occurs).. Functionally, cleaves peptides in various proteins in a process that requires ATP hydrolysis. Has a chymotrypsin-like activity. Plays a major role in the degradation of misfolded proteins. This is ATP-dependent Clp protease proteolytic subunit from Lobularia maritima (Sweet alyssum).